A 766-amino-acid polypeptide reads, in one-letter code: Transcription factor GTE4 (766 aa).

Disordered stretches follow at residues 87 to 108 (GTNS…PGDD), 234 to 262 (RDTT…PMEE), and 388 to 412 (GDKL…GDVG). Residues 238–250 (DAQQPAGLTSDSA) are compositionally biased toward polar residues. One can recognise a Bromo domain in the interval 416 to 522 (GAGTKVFKNC…QIFEERWAVI (107 aa)). Disordered regions lie at residues 544–606 (TMRS…NKRD) and 687–766 (ARAE…SDQT). A compositionally biased stretch (low complexity) spans 574–589 (PTTTPGRTPTSATPSG). The NET domain maps to 597-678 (PKANEPNKRD…NYKKGLSKKK (82 aa)). The segment covering 736-766 (SRSSSSSSSSSSSSSSDSDSDSSSSSGSDQT) has biased composition (low complexity).

In terms of tissue distribution, ubiquitously expressed.

Its subcellular location is the nucleus. Its function is as follows. Involved in the activation and maintenance of cell division in the meristems and by this controls cell numbers in differentiated organs. Its action in cell cycle regulation may be directed through the RB-E2F pathway. This Arabidopsis thaliana (Mouse-ear cress) protein is Transcription factor GTE4 (GTE4).